A 288-amino-acid polypeptide reads, in one-letter code: Lipoyl synthase (288 aa).

Residues C39, C44, C50, C65, C69, C72, and S276 each coordinate [4Fe-4S] cluster. The Radical SAM core domain maps to W51–E265.

This sequence belongs to the radical SAM superfamily. Lipoyl synthase family. Requires [4Fe-4S] cluster as cofactor.

The protein resides in the cytoplasm. The enzyme catalyses [[Fe-S] cluster scaffold protein carrying a second [4Fe-4S](2+) cluster] + N(6)-octanoyl-L-lysyl-[protein] + 2 oxidized [2Fe-2S]-[ferredoxin] + 2 S-adenosyl-L-methionine + 4 H(+) = [[Fe-S] cluster scaffold protein] + N(6)-[(R)-dihydrolipoyl]-L-lysyl-[protein] + 4 Fe(3+) + 2 hydrogen sulfide + 2 5'-deoxyadenosine + 2 L-methionine + 2 reduced [2Fe-2S]-[ferredoxin]. It participates in protein modification; protein lipoylation via endogenous pathway; protein N(6)-(lipoyl)lysine from octanoyl-[acyl-carrier-protein]: step 2/2. Functionally, catalyzes the radical-mediated insertion of two sulfur atoms into the C-6 and C-8 positions of the octanoyl moiety bound to the lipoyl domains of lipoate-dependent enzymes, thereby converting the octanoylated domains into lipoylated derivatives. This is Lipoyl synthase from Bacteroides fragilis (strain YCH46).